The chain runs to 295 residues: NAD kinase (295 aa).

Aspartate 73 serves as the catalytic Proton acceptor. NAD(+) is bound by residues 73–74 (DG), arginine 78, 146–147 (NE), lysine 157, arginine 174, aspartate 176, and 187–192 (TAYSLS).

This sequence belongs to the NAD kinase family. A divalent metal cation is required as a cofactor.

It localises to the cytoplasm. The enzyme catalyses NAD(+) + ATP = ADP + NADP(+) + H(+). In terms of biological role, involved in the regulation of the intracellular balance of NAD and NADP, and is a key enzyme in the biosynthesis of NADP. Catalyzes specifically the phosphorylation on 2'-hydroxyl of the adenosine moiety of NAD to yield NADP. This Wigglesworthia glossinidia brevipalpis protein is NAD kinase.